A 234-amino-acid polypeptide reads, in one-letter code: ATP-dependent dethiobiotin synthetase BioD (234 aa).

12 to 17 is an ATP binding site; that stretch reads DVGKTI. Residue Thr-16 coordinates Mg(2+). The active site involves Lys-37. Thr-41 contributes to the substrate binding site. ATP is bound by residues Asp-54 and 115-118; that span reads EGAG. 2 residues coordinate Mg(2+): Asp-54 and Glu-115.

The protein belongs to the dethiobiotin synthetase family. As to quaternary structure, homodimer. Mg(2+) is required as a cofactor.

The protein localises to the cytoplasm. The catalysed reaction is (7R,8S)-7,8-diammoniononanoate + CO2 + ATP = (4R,5S)-dethiobiotin + ADP + phosphate + 3 H(+). The protein operates within cofactor biosynthesis; biotin biosynthesis; biotin from 7,8-diaminononanoate: step 1/2. Catalyzes a mechanistically unusual reaction, the ATP-dependent insertion of CO2 between the N7 and N8 nitrogen atoms of 7,8-diaminopelargonic acid (DAPA, also called 7,8-diammoniononanoate) to form a ureido ring. The sequence is that of ATP-dependent dethiobiotin synthetase BioD from Lysinibacillus sphaericus (strain C3-41).